Here is a 420-residue protein sequence, read N- to C-terminus: Protein translocase subunit SecF (420 aa).

A run of 6 helical transmembrane segments spans residues 7 to 27, 250 to 270, 276 to 296, 309 to 327, 358 to 378, and 388 to 408; these read FSLLFLPCAILSVVLIGAGVL, LLVRQALLLVLGALVLIFLYV, WFFALGAIVALVHDACIMVSF, IAAILTIIGYSINDTVVVF, VVTTVTTLLAALMLYVFTEGG, and VGMVSGVYSTIYIAGGCIALI.

This sequence belongs to the SecD/SecF family. SecF subfamily. Forms a complex with SecD. Part of the essential Sec protein translocation apparatus which comprises SecA, SecYEG and auxiliary proteins SecDF. Other proteins may also be involved.

It localises to the cell inner membrane. Functionally, part of the Sec protein translocase complex. Interacts with the SecYEG preprotein conducting channel. SecDF uses the proton motive force (PMF) to complete protein translocation after the ATP-dependent function of SecA. The sequence is that of Protein translocase subunit SecF from Treponema pallidum (strain Nichols).